A 302-amino-acid chain; its full sequence is D-alanine--D-alanine ligase (302 aa).

Residues 100–294 (KALFRREGLL…FPELVEKLIQ (195 aa)) form the ATP-grasp domain. Position 127–180 (127–180 (GLNYPIFVKSNIGGSSVNVHLVTNYEELFIAMEALFNAGEEVLLEEAIIGQEVT)) interacts with ATP. Asp248, Glu261, and Asn263 together coordinate Mg(2+).

It belongs to the D-alanine--D-alanine ligase family. Mg(2+) is required as a cofactor. It depends on Mn(2+) as a cofactor.

It is found in the cytoplasm. It catalyses the reaction 2 D-alanine + ATP = D-alanyl-D-alanine + ADP + phosphate + H(+). It functions in the pathway cell wall biogenesis; peptidoglycan biosynthesis. Its function is as follows. Cell wall formation. The protein is D-alanine--D-alanine ligase of Lawsonia intracellularis (strain PHE/MN1-00).